A 792-amino-acid chain; its full sequence is Zinc finger protein 606 (792 aa).

In terms of domain architecture, KRAB spans 62 to 133 (VTFKDVAVDF…EQACPQRTCP (72 aa)). The C2H2-type 1; degenerate zinc finger occupies 289–311 (FKCTDAVKSFNHIIHFGDHKGIH). Residues 317 to 344 (YEYKECHQIFNQSPSFNEHPRLHVGENQ) form a C2H2-type 2; degenerate zinc finger. The C2H2-type 3; degenerate zinc-finger motif lies at 400–422 (YDYNECGTSFIWSSYLIQHKKTH). C2H2-type zinc fingers lie at residues 428–450 (YECD…ERTH), 456–478 (YECN…KRIH), 484–506 (YVCN…QRTH), 512–534 (FECT…MRMH), 540–562 (FKCD…ERTH), 568–590 (YKCT…QRTH), 596–618 (YNCQ…EIIH), 624–646 (YECN…QRTH), 652–674 (YECN…RRIH), 680–702 (YKCN…RRTH), 708–730 (YRCN…LRNH), 736–758 (YKCN…QRMH), and 764–786 (FICS…QRNH).

It belongs to the krueppel C2H2-type zinc-finger protein family. Widely expressed in adult and fetal tissues.

Its subcellular location is the nucleus. In terms of biological role, may act as a transcriptional repressor. The polypeptide is Zinc finger protein 606 (ZNF606) (Homo sapiens (Human)).